The following is a 977-amino-acid chain: Collagen alpha-2(I) chain (977 aa).

The interval 1–977 is disordered; the sequence is SGGFDFSFLP…RGSQGSQGPS (977 aa). 4-hydroxyproline occurs at positions 10, 13, 28, and 34. Positions 17–66 are enriched in low complexity; sequence GPMGLMGPRGPPGASGAPGPQGFQGPAGEPGEPGQTGPAGARGPAGPPGK. Lysine 91 carries the post-translational modification 5-hydroxylysine; alternate. An O-linked (Gal...) hydroxylysine; alternate glycan is attached at lysine 91. 2 stretches are compositionally biased toward low complexity: residues 138 to 159 and 205 to 226; these read SRGS…SAGP and PGAN…AGAP. A compositionally biased stretch (gly residues) spans 258–267; that stretch reads GESGGKGEPG. Over residues 268–278 the composition is skewed to low complexity; it reads SAGPQGPPGSS. Residues 300–309 are compositionally biased toward gly residues; sequence GLRGGPGSRG. The segment covering 322 to 338 has biased composition (low complexity); sequence PAGARGASGPAGVRGPS. 4-hydroxyproline is present on residues proline 344 and proline 347. Over residues 373–392 the composition is skewed to low complexity; sequence LPGIDGRPGPIGPAGARGEA. Residues 441–450 show a composition bias toward gly residues; sequence GVQGGKGEQG. 2 stretches are compositionally biased toward low complexity: residues 497–514 and 526–536; these read SGES…SRGP and EPGVVGAPGTA. A compositionally biased stretch (gly residues) spans 537-546; it reads GPAGSGGLPG. 2 stretches are compositionally biased toward low complexity: residues 569 to 605 and 620 to 640; these read VGTT…AGPA and VGPA…QPGA. Over residues 641–650 the composition is skewed to basic and acidic residues; sequence KGERGTKGPK. A compositionally biased stretch (low complexity) spans 658-668; it reads PTGPVGSAGPA. A compositionally biased stretch (gly residues) spans 678–687; that stretch reads GSRGDGGPPG. Low complexity predominate over residues 689–698; sequence TGFPGAAGRT. Residues 735–744 show a composition bias toward gly residues; it reads GETGAGGPPG. 2 stretches are compositionally biased toward low complexity: residues 752–779 and 787–797; these read SGEP…LGLP and LPGVAGAVGEP. A compositionally biased stretch (gly residues) spans 798-817; it reads GPLGIGPPGARGPSGAGVNG. Low complexity-rich tracts occupy residues 853–871 and 878–898; these read PVGA…PAGK and PGPA…PSGP. A compositionally biased stretch (basic and acidic residues) spans 902-913; it reads RGDKGEAGDKGP.

Belongs to the fibrillar collagen family. As to quaternary structure, trimers of one alpha 2(I) and two alpha 1(I) chains. Interacts (via C-terminus) with TMEM131 (via PapD-L domain); the interaction is direct and is involved in assembly and TRAPPIII ER-to-Golgi transport complex-dependent secretion of collagen. In terms of processing, prolines at the third position of the tripeptide repeating unit (G-X-Y) are hydroxylated in some or all of the chains. As to expression, expressed in bones.

The protein localises to the secreted. The protein resides in the extracellular space. It localises to the extracellular matrix. Functionally, type I collagen is a member of group I collagen (fibrillar forming collagen). The protein is Collagen alpha-2(I) chain of Scelidodon sp. (strain SLP-2019) (South American ground sloth).